The sequence spans 257 residues: uncharacterized protein (257 aa).

A helical membrane pass occupies residues 7 to 27 (IGILEIVVILSILITSVSLAY).

The protein localises to the membrane. This is an uncharacterized protein from Methanocaldococcus jannaschii (strain ATCC 43067 / DSM 2661 / JAL-1 / JCM 10045 / NBRC 100440) (Methanococcus jannaschii).